We begin with the raw amino-acid sequence, 291 residues long: Bifunctional protein FolD (291 aa).

NADP(+) is bound by residues Gly-168 to Gly-170, Thr-195, and Ile-236.

This sequence belongs to the tetrahydrofolate dehydrogenase/cyclohydrolase family. In terms of assembly, homodimer.

It carries out the reaction (6R)-5,10-methylene-5,6,7,8-tetrahydrofolate + NADP(+) = (6R)-5,10-methenyltetrahydrofolate + NADPH. The catalysed reaction is (6R)-5,10-methenyltetrahydrofolate + H2O = (6R)-10-formyltetrahydrofolate + H(+). It participates in one-carbon metabolism; tetrahydrofolate interconversion. Catalyzes the oxidation of 5,10-methylenetetrahydrofolate to 5,10-methenyltetrahydrofolate and then the hydrolysis of 5,10-methenyltetrahydrofolate to 10-formyltetrahydrofolate. This Bifidobacterium longum subsp. infantis (strain ATCC 15697 / DSM 20088 / JCM 1222 / NCTC 11817 / S12) protein is Bifunctional protein FolD.